The sequence spans 661 residues: Coagulation factor XIII B chain (661 aa).

The signal sequence occupies residues 1-20 (MRLKNLTFIIILIISGELYA). Sushi domains are found at residues 24–88 (PCGF…PRCF), 89–148 (KKCT…TCRK), 151–210 (ETCL…KCTK), 211–269 (LKCS…VCEG), 272–329 (NRCP…KCIE), 334–391 (VACE…ECVE), 394–452 (ENCK…VCLE), 453–516 (PCTV…PLCT), 522–580 (GMCT…LCLE), and 581–647 (PCTL…PRCI). 20 cysteine pairs are disulfide-bonded: cysteine 25-cysteine 76, cysteine 59-cysteine 87, cysteine 91-cysteine 135, cysteine 118-cysteine 146, cysteine 153-cysteine 197, cysteine 180-cysteine 208, cysteine 213-cysteine 255, cysteine 241-cysteine 267, cysteine 274-cysteine 316, cysteine 302-cysteine 327, cysteine 336-cysteine 378, cysteine 364-cysteine 389, cysteine 396-cysteine 439, cysteine 425-cysteine 450, cysteine 454-cysteine 505, cysteine 486-cysteine 515, cysteine 524-cysteine 567, cysteine 553-cysteine 578, cysteine 582-cysteine 636, and cysteine 616-cysteine 646. N-linked (GlcNAc...) asparagine glycosylation occurs at asparagine 162. An N-linked (GlcNAc...) asparagine glycan is attached at asparagine 545. The Cell attachment site motif lies at 617-619 (RGD).

Tetramer of two A chains (F13A1) and two B (F13B) chains.

It localises to the secreted. In terms of biological role, the B chain of factor XIII is not catalytically active, but is thought to stabilize the A subunits and regulate the rate of transglutaminase formation by thrombin. This Homo sapiens (Human) protein is Coagulation factor XIII B chain (F13B).